Consider the following 560-residue polypeptide: 2-succinyl-5-enolpyruvyl-6-hydroxy-3-cyclohexene-1-carboxylate synthase (560 aa).

The protein belongs to the TPP enzyme family. MenD subfamily. In terms of assembly, homodimer. The cofactor is Mg(2+). Mn(2+) serves as cofactor. Thiamine diphosphate is required as a cofactor.

The enzyme catalyses isochorismate + 2-oxoglutarate + H(+) = 5-enolpyruvoyl-6-hydroxy-2-succinyl-cyclohex-3-ene-1-carboxylate + CO2. The protein operates within quinol/quinone metabolism; 1,4-dihydroxy-2-naphthoate biosynthesis; 1,4-dihydroxy-2-naphthoate from chorismate: step 2/7. Its pathway is quinol/quinone metabolism; menaquinone biosynthesis. Functionally, catalyzes the thiamine diphosphate-dependent decarboxylation of 2-oxoglutarate and the subsequent addition of the resulting succinic semialdehyde-thiamine pyrophosphate anion to isochorismate to yield 2-succinyl-5-enolpyruvyl-6-hydroxy-3-cyclohexene-1-carboxylate (SEPHCHC). The sequence is that of 2-succinyl-5-enolpyruvyl-6-hydroxy-3-cyclohexene-1-carboxylate synthase from Pectobacterium atrosepticum (strain SCRI 1043 / ATCC BAA-672) (Erwinia carotovora subsp. atroseptica).